The sequence spans 286 residues: Pantothenate synthetase (286 aa).

Residue 31-38 (MGALHDGH) coordinates ATP. Catalysis depends on His-38, which acts as the Proton donor. Gln-62 lines the (R)-pantoate pocket. Gln-62 lines the beta-alanine pocket. 148–151 (GKKD) contacts ATP. Gln-154 is a binding site for (R)-pantoate. ATP-binding positions include Val-177 and 185–188 (KSSR).

Belongs to the pantothenate synthetase family. As to quaternary structure, homodimer.

The protein resides in the cytoplasm. It carries out the reaction (R)-pantoate + beta-alanine + ATP = (R)-pantothenate + AMP + diphosphate + H(+). It functions in the pathway cofactor biosynthesis; (R)-pantothenate biosynthesis; (R)-pantothenate from (R)-pantoate and beta-alanine: step 1/1. Functionally, catalyzes the condensation of pantoate with beta-alanine in an ATP-dependent reaction via a pantoyl-adenylate intermediate. This chain is Pantothenate synthetase, found in Staphylococcus carnosus (strain TM300).